A 359-amino-acid polypeptide reads, in one-letter code: Oplophorus-luciferin 2-monooxygenase non-catalytic subunit (359 aa).

The signal sequence occupies residues 1-39 (MAVNFKFSLLTITIVVNILVYCNASAIKFDVDLEKVPSN). LRR repeat units follow at residues 135–158 (AATL…EMSQ), 160–180 (TKLN…ALSS), 181–203 (DTLA…AFQT), 228–251 (SPKL…AIKL), 255–278 (GPTT…AVEG), 280–300 (QGIL…VWRP), 302–325 (LENL…MWLI), and 331–356 (LAKI…VFHA).

In terms of assembly, heterotetramer of a catalytic 19 kDa and a non-catalytic 35 kDa subunit.

It is found in the secreted. Its function is as follows. Non-catalytic subunit of oplophorus-luciferin 2-monooxygenase. May stabilize the active conformation of the catalytic subunit. The protein is Oplophorus-luciferin 2-monooxygenase non-catalytic subunit of Oplophorus gracilirostris (Luminous shrimp).